The sequence spans 343 residues: Protein RecA (343 aa).

Gly68–Thr75 serves as a coordination point for ATP.

It belongs to the RecA family.

It is found in the cytoplasm. Can catalyze the hydrolysis of ATP in the presence of single-stranded DNA, the ATP-dependent uptake of single-stranded DNA by duplex DNA, and the ATP-dependent hybridization of homologous single-stranded DNAs. It interacts with LexA causing its activation and leading to its autocatalytic cleavage. The polypeptide is Protein RecA (Syntrophus aciditrophicus (strain SB)).